A 562-amino-acid chain; its full sequence is MEDLRRRFPTKKNGEEISNVAVDPPLRKASDALPLPLYLTNTFFLSLFFATVYFLLSRWREKIRNSTPLHVVDLSEICALIGFVASFIYLLGFCGIDLIFRSSSDDDVWVNDGMIPCNQSLDCREVLPIKPNSVDPPRESELDSVEDEEIVKLVIDGTIPSYSLETKLGDCKRAAAIRREAVQRITGKSLTGLPLEGFDYNSILGQCCEMPVGYVQIPVGIAGPLLLDGVEYSVPMATTEGCLVASTNRGFKAIHLSGGAFSVLVKDAMTRAPVVRFPSARRAALVMFYLQDPSNFERLSLIFNKSSRFARLQSITCTIAGRNLYPRFACSTGDAMGMNMVSKGVQNVLDFVKSEFPDMDVIGISGNYCSDKKASAVNWIEGRGKHVVCEAFIKAEIVEKVLKTSVEALVELNTLKNLVGSAMAGSLGGFNAHSSNIVSAVFIATGQDPAQNVESSHCMTMILPDGDDLHISVSMPCIEVGTVGGGTQLASQAACLNLLGVKGSNNEKPGSNAQQLARIVAGSVLAGELSLMSAIAAGQLVKSHMKYNRSSRDIGPSSQVNR.

2 consecutive transmembrane segments (helical) span residues 32-56 (ALPL…YFLL) and 77-100 (ICAL…DLIF). The linker stretch occupies residues 101–146 (RSSSDDDVWVNDGMIPCNQSLDCREVLPIKPNSVDPPRESELDSVE). Residue N118 is glycosylated (N-linked (GlcNAc...) asparagine). Positions 147 to 562 (DEEIVKLVID…DIGPSSQVNR (416 aa)) are catalytic. E240 functions as the Charge relay system in the catalytic mechanism. N304 carries an N-linked (GlcNAc...) asparagine glycan. Active-site charge relay system residues include K372 and D448. The active-site Proton donor is the H544. A glycan (N-linked (GlcNAc...) asparagine) is linked at N548. A Phosphoserine modification is found at S550.

It belongs to the HMG-CoA reductase family. In terms of tissue distribution, restricted to young seedlings, roots, and inflorescences. Expressed in root tips, shoot apex, secretory zone of the stigma, microspores, mature pollen grains, gynoecium vascular tissue and fertilized ovules.

The protein localises to the endoplasmic reticulum membrane. The enzyme catalyses (R)-mevalonate + 2 NADP(+) + CoA = (3S)-3-hydroxy-3-methylglutaryl-CoA + 2 NADPH + 2 H(+). Its pathway is metabolic intermediate biosynthesis; (R)-mevalonate biosynthesis; (R)-mevalonate from acetyl-CoA: step 3/3. With respect to regulation, regulated at the post-translational level in response to alterations of the sphingolipid and the sterol biosynthetic pathways. Its function is as follows. Catalyzes the synthesis of mevalonate. The specific precursor of all isoprenoid compounds present in plants. The chain is 3-hydroxy-3-methylglutaryl-coenzyme A reductase 2 (HMG2) from Arabidopsis thaliana (Mouse-ear cress).